Consider the following 316-residue polypeptide: MGRVYYINSHGTLSRHENTLRFENAEVKKDIPVEDVEEIFVFAELSLNTKLLNFLASKGIPLHFFNYYGYYTGTFYPRESSVSGHLLIKQVEHYLDAQKRLYLAKSFVIGSILNLEYVYKISADTYLNKVKETNSIPELMSVEAEFRKLCYKKLEEVTGWELEKRTKRPPQNPLNALISFGNSLTYAKVLGEIYKTQLNPTVSYLHEPSTKRFSLSLDVAEVFKPIFVDNLIIRLIQENKIDKTHFSTELNMTFLNEIGRKVFLKAFNELLETTIFYPKLNRKVSHRTLIKLELYKLIKHLLEEEVYLPLNYGGLK.

Residues E143, H206, and E221 each coordinate Mn(2+).

Belongs to the CRISPR-associated endonuclease Cas1 family. Homodimer, forms a heterotetramer with a Cas2 homodimer. Mg(2+) serves as cofactor. Requires Mn(2+) as cofactor.

Its function is as follows. CRISPR (clustered regularly interspaced short palindromic repeat), is an adaptive immune system that provides protection against mobile genetic elements (viruses, transposable elements and conjugative plasmids). CRISPR clusters contain spacers, sequences complementary to antecedent mobile elements, and target invading nucleic acids. CRISPR clusters are transcribed and processed into CRISPR RNA (crRNA). Acts as a dsDNA endonuclease. Involved in the integration of spacer DNA into the CRISPR cassette. This Aquifex aeolicus (strain VF5) protein is CRISPR-associated endonuclease Cas1.